Consider the following 299-residue polypeptide: 4-hydroxy-tetrahydrodipicolinate synthase (299 aa).

Threonine 45 lines the pyruvate pocket. Tyrosine 133 acts as the Proton donor/acceptor in catalysis. Lysine 161 acts as the Schiff-base intermediate with substrate in catalysis. Pyruvate is bound at residue isoleucine 203.

This sequence belongs to the DapA family. In terms of assembly, homotetramer; dimer of dimers.

Its subcellular location is the cytoplasm. It catalyses the reaction L-aspartate 4-semialdehyde + pyruvate = (2S,4S)-4-hydroxy-2,3,4,5-tetrahydrodipicolinate + H2O + H(+). Its pathway is amino-acid biosynthesis; L-lysine biosynthesis via DAP pathway; (S)-tetrahydrodipicolinate from L-aspartate: step 3/4. Catalyzes the condensation of (S)-aspartate-beta-semialdehyde [(S)-ASA] and pyruvate to 4-hydroxy-tetrahydrodipicolinate (HTPA). This Blochmanniella pennsylvanica (strain BPEN) protein is 4-hydroxy-tetrahydrodipicolinate synthase.